A 62-amino-acid polypeptide reads, in one-letter code: Sperm protamine P1 (62 aa).

Residues 1 to 62 (MARYRHSRSR…RYSRRRRRRY (62 aa)) are disordered.

Belongs to the protamine P1 family. Testis.

It localises to the nucleus. Its subcellular location is the chromosome. Functionally, protamines substitute for histones in the chromatin of sperm during the haploid phase of spermatogenesis. They compact sperm DNA into a highly condensed, stable and inactive complex. The chain is Sperm protamine P1 (PRM1) from Wallabia bicolor (Swamp wallaby).